A 205-amino-acid chain; its full sequence is Ephrin-A1 (205 aa).

The first 18 residues, 1 to 18 (MEFLWAPLLGLCCSLAAA), serve as a signal peptide directing secretion. An Ephrin RBD domain is found at 19–151 (DRHTVFWNSS…RLKVTVSGKI (133 aa)). A glycan (N-linked (GlcNAc...) asparagine) is linked at asparagine 26. 2 disulfides stabilise this stretch: cysteine 51-cysteine 92 and cysteine 80-cysteine 140. Serine 182 is lipidated: GPI-anchor amidated serine. Positions 183–205 (AAPRLFPLAWTVLLLPLLLLQTP) are cleaved as a propeptide — removed in mature form.

It belongs to the ephrin family. In terms of assembly, monomer. Homodimer. Forms heterodimers with EPHA2. Binds to the receptor tyrosine kinases EPHA2, EPHA3, EPHA4, EPHA5, EPHA6 and EPHA7. Also binds with low affinity to EPHA1. Undergoes proteolysis by a metalloprotease to give rise to a soluble monomeric form. Post-translationally, N-Glycosylation is required for binding to EPHA2 receptor and inducing its internalization. As to expression, brain. Down-regulated in primary glioma tissues compared to the normal tissues. The soluble monomeric form is expressed in the glioblastoma multiforme (GBM) and breast cancer cells (at protein level).

It is found in the cell membrane. The protein localises to the secreted. In terms of biological role, cell surface GPI-bound ligand for Eph receptors, a family of receptor tyrosine kinases which are crucial for migration, repulsion and adhesion during neuronal, vascular and epithelial development. Binds promiscuously Eph receptors residing on adjacent cells, leading to contact-dependent bidirectional signaling into neighboring cells. Plays an important role in angiogenesis and tumor neovascularization. The recruitment of VAV2, VAV3 and PI3-kinase p85 subunit by phosphorylated EPHA2 is critical for EFNA1-induced RAC1 GTPase activation and vascular endothelial cell migration and assembly. Exerts anti-oncogenic effects in tumor cells through activation and down-regulation of EPHA2. Activates EPHA2 by inducing tyrosine phosphorylation which leads to its internalization and degradation. Acts as a negative regulator in the tumorigenesis of gliomas by down-regulating EPHA2 and FAK. Can evoke collapse of embryonic neuronal growth cone and regulates dendritic spine morphogenesis. In Homo sapiens (Human), this protein is Ephrin-A1 (EFNA1).